Consider the following 192-residue polypeptide: uncharacterized protein (192 aa).

The 132-residue stretch at 29–160 (QRQAAVLIPV…PLDVYRRGNS (132 aa)) folds into the Nudix hydrolase domain. A Nudix box motif is present at residues 67 to 89 (GAVDSTDASLIAAALREAQEEVA). The Mg(2+) site is built by glutamate 83 and glutamate 87.

The protein belongs to the Nudix hydrolase family. PCD1 subfamily. Mn(2+) serves as cofactor. Mg(2+) is required as a cofactor.

Probably mediates the hydrolysis of some nucleoside diphosphate derivatives. This is an uncharacterized protein from Salmonella agona (strain SL483).